A 196-amino-acid chain; its full sequence is Peroxiredoxin TSA2 (196 aa).

The Thioredoxin domain maps to 3-161 (AEVQKQAPPF…ALRLVEGFQW (159 aa)). Residue K14 forms a Glycyl lysine isopeptide (Lys-Gly) (interchain with G-Cter in ubiquitin) linkage. Residue C48 is the Cysteine sulfenic acid (-SOH) intermediate of the active site. Glycyl lysine isopeptide (Lys-Gly) (interchain with G-Cter in ubiquitin) cross-links involve residues K89 and K132. Position 174 is a phosphothreonine (T174).

Belongs to the peroxiredoxin family. AhpC/Prx1 subfamily. Homodimer; disulfide-linked, upon oxidation.

The protein resides in the cytoplasm. It carries out the reaction a hydroperoxide + [thioredoxin]-dithiol = an alcohol + [thioredoxin]-disulfide + H2O. Thiol-specific peroxidase that catalyzes the reduction of hydrogen peroxide and organic hydroperoxides to water and alcohols, respectively. Plays a role in cell protection against oxidative stress by detoxifying peroxides and as sensor of hydrogen peroxide-mediated signaling events. Can act alternatively as peroxidase and molecular chaperone. Oxidative stress and heat shock exposure cause a reversible shift of the protein structure from low MW species to high MW complexes, triggering a peroxidase-to-chaperone functional switch. The chaperone function of the protein enhances resistance to heat shock. The chain is Peroxiredoxin TSA2 from Saccharomyces cerevisiae (strain ATCC 204508 / S288c) (Baker's yeast).